The chain runs to 1255 residues: Structural polyprotein (1255 aa).

A necessary for nucleocapsid assembly and virus assembly region spans residues 1–33 (MFPFQPMYPMQPMPYRNPFAAPRRPWFPRTDPF). The segment at 33–68 (FLAMQVQELTRSMANLTFKQRREAPPEGPPAKKPKR) is host transcription inhibition. Positions 41–48 (LTRSMANL) match the Supraphysiological nuclear export signal motif. Positions 44-119 (SMANLTFKQR…KKPGKRQRMV (76 aa)) are disordered. Asn-47 is a glycosylation site (N-linked (GlcNAc...) asparagine; by host). Residues 64–68 (KKPKR) carry the Nuclear localization signal motif. A compositionally biased stretch (basic residues) spans 80 to 92 (GKKKKNQGKKKAK). Residues 91-127 (AKTGPPNPKAQNGNKKKTNKKPGKRQRMVMKLESDKT) are binding to the viral RNA. A phosphothreonine mark is found at Thr-93 and Thr-108. Basic residues predominate over residues 104-118 (NKKKTNKKPGKRQRM). The interval 112–126 (PGKRQRMVMKLESDK) is ribosome-binding. Ser-124 is subject to Phosphoserine. Residues 126–275 (KTFPIMLEGK…KYTPENCEQW (150 aa)) enclose the Peptidase S3 domain. At Thr-127 the chain carries Phosphothreonine. His-152 serves as the catalytic Charge relay system. Positions 168–173 (KKASKY) are interaction with spike glycoprotein E2. Catalysis depends on charge relay system residues Asp-174 and Ser-226. The interaction with spike glycoprotein E2 stretch occupies residues 260-264 (EKGVT). Residues 276–287 (SLVTTMCLLANV) are functions as an uncleaved signal peptide for the precursor of protein E3/E2. At 276 to 701 (SLVTTMCLLA…HYYHRYPMST (426 aa)) the chain is on the extracellular side. 7 disulfide bridges follow: Cys-282-Cys-291, Cys-353-Cys-457, Cys-356-Cys-361, Cys-424-Cys-438, Cys-485-Cys-600, Cys-534-Cys-560, and Cys-536-Cys-554. N-linked (GlcNAc...) asparagine; by host glycosylation is present at Asn-286. Residue Asn-652 is glycosylated (N-linked (GlcNAc...) asparagine; by host). A helical membrane pass occupies residues 702–722 (ILGLSICAAIVTVSIAASTWL). Topologically, residues 723 to 757 (LCKSRVSCLTPYRLTPNARMPLCLAVLCCARTARA) are cytoplasmic. Positions 725–729 (KSRVS) are interaction with the capsid protein. S-palmitoyl cysteine; by host attachment occurs at residues Cys-730, Cys-750, and Cys-751. Residues 730–750 (CLTPYRLTPNARMPLCLAVLC) are transient transmembrane before p62-6K protein processing. Residues Cys-730 and Cys-751 are joined by a disulfide bond. Residues 758 to 772 (ETTWESLDHLWNNNQ) are Extracellular-facing. The chain crosses the membrane as a helical span at residues 773–793 (QMFWIQLLIPLAALIVVTRLL). Position 794 (Arg-794) is a topological domain, cytoplasmic. The chain crosses the membrane as a helical span at residues 795–815 (CVCCVVPFLVVAGAAGAGAYE). Over 816 to 1225 (HATTMPSQAG…SKTAWTWLTS (410 aa)) the chain is Extracellular. Intrachain disulfides connect Cys-862–Cys-927, Cys-875–Cys-907, Cys-876–Cys-909, and Cys-881–Cys-891. Positions 897-914 (VYPFMWGGAYCFCDTENT) are E1 fusion peptide loop. Residues Asn-947 and Asn-1083 are each glycosylated (N-linked (GlcNAc...) asparagine; by host). 4 disulfides stabilise this stretch: Cys-1072/Cys-1084, Cys-1114/Cys-1189, Cys-1119/Cys-1193, and Cys-1141/Cys-1183. The chain crosses the membrane as a helical span at residues 1226–1246 (LLGGSAVIIIIGLVLATIVAM). The Cytoplasmic portion of the chain corresponds to 1247–1255 (YVLTNQKHN).

In terms of assembly, homodimer. Homomultimer. Interacts with host karyopherin KPNA4; this interaction allows the nuclear import of the viral capsid protein. Interacts with spike glycoprotein E2. Interacts with host IRAK1; the interaction leads to inhibition of IRAK1-dependent signaling. Part of a tetrameric complex composed of host CRM1, host importin alpha/beta dimer and the viral capsid; this complex blocks the receptor-mediated transport through the nuclear pore. Interacts with host phosphatase PPP1CA; this interaction dephosphorylates the capsid protein, which increases its ability to bind to the viral genome. As to quaternary structure, the precursor of protein E3/E2 and E1 form a heterodimer shortly after synthesis. Interacts with spike glycoprotein E2. The precursor of protein E3/E2 and E1 form a heterodimer shortly after synthesis. Processing of the precursor of protein E3/E2 into E2 and E3 results in a heterodimer of the spike glycoproteins E2 and E1. Spike at virion surface are constituted of three E2-E1 heterodimers. After target cell attachment and endocytosis, E1 change conformation to form homotrimers. Interacts with 6K protein. Interacts with host LDLRAD3; this interaction mediates viral entry to the host cell. In terms of assembly, interacts with spike glycoprotein E1. Processing of the precursor of protein E3/E2 into E2 and E3 results in a heterodimer of the spike glycoproteins E2 and E1. Spike at virion surface are constituted of a trimer of E2-E1 heterodimers. Interacts with 6K protein. Interacts with host LDLRAD3; this interaction mediates viral entry to the host cell. As to quaternary structure, oligomer. Interacts with spike glycoprotein E1. Interacts with spike glycoprotein E2. In terms of processing, structural polyprotein: Specific enzymatic cleavages in vivo yield mature proteins. Capsid protein is auto-cleaved during polyprotein translation, unmasking a signal peptide at the N-terminus of the precursor of E3/E2. The remaining polyprotein is then targeted to the host endoplasmic reticulum, where host signal peptidase cleaves it into pE2, 6K and E1 proteins. pE2 is further processed to mature E3 and E2 by host furin in trans-Golgi vesicle. Phosphorylated on serine and threonine residues. Post-translationally, palmitoylated via thioester bonds. These palmitoylations may induce disruption of the C-terminus transmembrane. This would result in the reorientation of E2 C-terminus from lumenal to cytoplasmic side. In terms of processing, N-glycosylated. Palmitoylated via thioester bonds.

The protein localises to the virion. It is found in the host cytoplasm. The protein resides in the host cell membrane. It localises to the host nucleus. Its subcellular location is the virion membrane. The protein localises to the host Golgi apparatus. It is found in the host trans-Golgi network. The protein resides in the host endoplasmic reticulum. It catalyses the reaction Autocatalytic release of the core protein from the N-terminus of the togavirus structural polyprotein by hydrolysis of a -Trp-|-Ser- bond.. Forms an icosahedral capsid with a T=4 symmetry composed of 240 copies of the capsid protein surrounded by a lipid membrane through which penetrate 80 spikes composed of trimers of E1-E2 heterodimers. The capsid protein binds to the viral RNA genome at a site adjacent to a ribosome binding site for viral genome translation following genome release. Possesses a protease activity that results in its autocatalytic cleavage from the nascent structural protein. Following its self-cleavage, the capsid protein transiently associates with ribosomes, and within several minutes the protein binds to viral RNA and rapidly assembles into icosahedric core particles. The resulting nucleocapsid eventually associates with the cytoplasmic domain of the spike glycoprotein E2 at the cell membrane, leading to budding and formation of mature virions. In case of infection, new virions attach to target cells and after clathrin-mediated endocytosis their membrane fuses with the host endosomal membrane. This leads to the release of the nucleocapsid into the cytoplasm, followed by an uncoating event necessary for the genomic RNA to become accessible. The uncoating might be triggered by the interaction of capsid proteins with ribosomes. Binding of ribosomes would release the genomic RNA since the same region is genomic RNA-binding and ribosome-binding. Specifically inhibits interleukin-1 receptor-associated kinase 1/IRAK1-dependent signaling during viral entry, representing a means by which the alphaviruses may evade innate immune detection and activation prior to viral gene expression. Inhibits host transcription. Forms a tetrameric complex with XPO1/CRM1 and the nuclear import receptor importin. This complex blocks the central channel of host nuclear pores thereby inhibiting the receptor-mediated nuclear transport and thus the host mRNA and rRNA transcription. The inhibition of transcription is linked to a cytopathic effect on the host cell. Its function is as follows. Provides the signal sequence for the translocation of the precursor of protein E3/E2 to the host endoplasmic reticulum. Furin-cleaved E3 remains associated with spike glycoprotein E1 and mediates pH protection of the latter during the transport via the secretory pathway. After virion release from the host cell, the assembly protein E3 is gradually released in the extracellular space. In terms of biological role, plays a role in viral attachment to target host cell, by binding to the cell receptor LDLRAD3. Synthesized as a p62 precursor which is processed by furin at the cell membrane just before virion budding, giving rise to E2-E1 heterodimer. The p62-E1 heterodimer is stable, whereas E2-E1 is unstable and dissociate at low pH. p62 is processed at the last step, presumably to avoid E1 fusion activation before its final export to cell surface. E2 C-terminus contains a transitory transmembrane that would be disrupted by palmitoylation, resulting in reorientation of the C-terminal tail from lumenal to cytoplasmic side. This step is critical since E2 C-terminus is involved in budding by interacting with capsid proteins. This release of E2 C-terminus in cytoplasm occurs lately in protein export, and precludes premature assembly of particles at the endoplasmic reticulum membrane. Functionally, acts as a viroporin that participates in virus glycoprotein processing and transport to the plasma membrane, cell permeabilization and budding of viral particles. Disrupts the calcium homeostasis of the cell, probably at the endoplasmic reticulum level. This leads to cytoplasmic calcium elevation. Because of its lipophilic properties, the 6K protein is postulated to influence the selection of lipids that interact with the transmembrane domains of the glycoproteins, which, in turn, affects the deformability of the bilayer required for the extreme curvature that occurs as budding proceeds. Present in low amount in virions, about 3% compared to viral glycoproteins. Class II viral fusion protein. Fusion activity is inactive as long as E1 is bound to E2 in mature virion. After virus attachment to cell receptor LDLRAD3 and endocytosis, acidification of the endosome induce dissociation of E1/E2 heterodimer and concomitant trimerization of the E1 subunits. This E1 trimer is fusion active, and promotes release of viral nucleocapsid in cytoplasm after endosome and viral membrane fusion. Efficient fusion requires the presence of cholesterol and sphingolipid in the target membrane. In Venezuelan equine encephalitis virus (strain 3880) (VEEV), this protein is Structural polyprotein.